Here is a 355-residue protein sequence, read N- to C-terminus: D-alanine--D-alanine ligase (355 aa).

One can recognise an ATP-grasp domain in the interval 143 to 350 (KQIFSNLSIP…IDQLVAKLID (208 aa)). Residue 178–233 (IEKLNLPVFVKPANSGSSLGISKAKNKSEIIKALQKAWEIDSRIVIEEGLNVRELE) coordinates ATP. D303, E317, and N319 together coordinate Mg(2+).

The protein belongs to the D-alanine--D-alanine ligase family. It depends on Mg(2+) as a cofactor. The cofactor is Mn(2+).

The protein resides in the cytoplasm. It catalyses the reaction 2 D-alanine + ATP = D-alanyl-D-alanine + ADP + phosphate + H(+). It participates in cell wall biogenesis; peptidoglycan biosynthesis. Functionally, cell wall formation. In Prochlorococcus marinus (strain MIT 9515), this protein is D-alanine--D-alanine ligase.